The primary structure comprises 475 residues: tRNA modification GTPase MnmE (475 aa).

(6S)-5-formyl-5,6,7,8-tetrahydrofolate contacts are provided by Arg24, Glu81, and Lys124. One can recognise a TrmE-type G domain in the interval 220 to 397; that stretch reads GLSVVLAGQP…LRRELLRLVG (178 aa). Asn230 is a binding site for K(+). GTP-binding positions include 230–235, 249–255, 274–277, and 378–380; these read NVGKSS, TPIAGTT, DTAG, and SAR. Ser234 serves as a coordination point for Mg(2+). Residues Thr249, Ile251, and Thr254 each coordinate K(+). Mg(2+) is bound at residue Thr255. (6S)-5-formyl-5,6,7,8-tetrahydrofolate is bound at residue Lys475.

This sequence belongs to the TRAFAC class TrmE-Era-EngA-EngB-Septin-like GTPase superfamily. TrmE GTPase family. In terms of assembly, homodimer. Heterotetramer of two MnmE and two MnmG subunits. K(+) serves as cofactor.

The protein localises to the cytoplasm. Exhibits a very high intrinsic GTPase hydrolysis rate. Involved in the addition of a carboxymethylaminomethyl (cmnm) group at the wobble position (U34) of certain tRNAs, forming tRNA-cmnm(5)s(2)U34. This Cupriavidus necator (strain ATCC 17699 / DSM 428 / KCTC 22496 / NCIMB 10442 / H16 / Stanier 337) (Ralstonia eutropha) protein is tRNA modification GTPase MnmE.